The following is a 638-amino-acid chain: Phosphomethylpyrimidine synthase (638 aa).

Residues asparagine 235, methionine 264, tyrosine 293, histidine 329, 349–351, 390–393, and glutamate 429 each bind substrate; these read SRG and DGLR. Residue histidine 433 coordinates Zn(2+). Tyrosine 456 is a binding site for substrate. Histidine 497 lines the Zn(2+) pocket. [4Fe-4S] cluster contacts are provided by cysteine 577, cysteine 580, and cysteine 585.

The protein belongs to the ThiC family. In terms of assembly, homodimer. [4Fe-4S] cluster serves as cofactor.

The catalysed reaction is 5-amino-1-(5-phospho-beta-D-ribosyl)imidazole + S-adenosyl-L-methionine = 4-amino-2-methyl-5-(phosphooxymethyl)pyrimidine + CO + 5'-deoxyadenosine + formate + L-methionine + 3 H(+). Its pathway is cofactor biosynthesis; thiamine diphosphate biosynthesis. Functionally, catalyzes the synthesis of the hydroxymethylpyrimidine phosphate (HMP-P) moiety of thiamine from aminoimidazole ribotide (AIR) in a radical S-adenosyl-L-methionine (SAM)-dependent reaction. In Polaromonas naphthalenivorans (strain CJ2), this protein is Phosphomethylpyrimidine synthase.